A 275-amino-acid polypeptide reads, in one-letter code: Urease accessory protein UreD (275 aa).

It belongs to the UreD family. As to quaternary structure, ureD, UreF and UreG form a complex that acts as a GTP-hydrolysis-dependent molecular chaperone, activating the urease apoprotein by helping to assemble the nickel containing metallocenter of UreC. The UreE protein probably delivers the nickel.

The protein resides in the cytoplasm. Its function is as follows. Required for maturation of urease via the functional incorporation of the urease nickel metallocenter. This Cereibacter sphaeroides (strain ATCC 17025 / ATH 2.4.3) (Rhodobacter sphaeroides) protein is Urease accessory protein UreD.